We begin with the raw amino-acid sequence, 493 residues long: Ribose import ATP-binding protein RbsA (493 aa).

ABC transporter domains are found at residues Ile-3–Glu-239 and Gly-252–Arg-493. Gly-35–Ser-42 contributes to the ATP binding site.

It belongs to the ABC transporter superfamily. Ribose importer (TC 3.A.1.2.1) family. In terms of assembly, the complex is composed of an ATP-binding protein (RbsA), two transmembrane proteins (RbsC) and a solute-binding protein (RbsB).

The protein localises to the cell membrane. It carries out the reaction D-ribose(out) + ATP + H2O = D-ribose(in) + ADP + phosphate + H(+). In terms of biological role, part of the ABC transporter complex RbsABC involved in ribose import. Responsible for energy coupling to the transport system. This chain is Ribose import ATP-binding protein RbsA, found in Bacillus licheniformis (strain ATCC 14580 / DSM 13 / JCM 2505 / CCUG 7422 / NBRC 12200 / NCIMB 9375 / NCTC 10341 / NRRL NRS-1264 / Gibson 46).